We begin with the raw amino-acid sequence, 320 residues long: Protein phosphatase PTC7 homolog fig (320 aa).

The PPM-type phosphatase domain maps to proline 49–valine 315. Aspartate 93, glycine 94, and aspartate 238 together coordinate Mn(2+).

This sequence belongs to the PP2C family. Mg(2+) is required as a cofactor. It depends on Mn(2+) as a cofactor.

It carries out the reaction O-phospho-L-seryl-[protein] + H2O = L-seryl-[protein] + phosphate. It catalyses the reaction O-phospho-L-threonyl-[protein] + H2O = L-threonyl-[protein] + phosphate. The chain is Protein phosphatase PTC7 homolog fig from Drosophila yakuba (Fruit fly).